A 214-amino-acid polypeptide reads, in one-letter code: Metalloproteinase inhibitor 3 (214 aa).

An N-terminal signal peptide occupies residues 1–26; that stretch reads MVFSTTAALSLLLALSSMQLSEVSEA. Cysteine 27 contacts Zn(2+). 2 involved in metalloproteinase-binding regions span residues 27-30 and 91-92; these read CTCM and ES. 6 disulfides stabilise this stretch: cysteine 27/cysteine 94, cysteine 29/cysteine 121, cysteine 39/cysteine 146, cysteine 148/cysteine 195, cysteine 153/cysteine 158, and cysteine 166/cysteine 187. One can recognise an NTR domain in the interval 27-146; it reads CTCMPNHPQE…GLNHRYQYGC (120 aa). A glycan (N-linked (GlcNAc...) asparagine) is linked at asparagine 210.

Belongs to the protease inhibitor I35 (TIMP) family. As to expression, expressed abundantly in brain and cartilage.

The protein resides in the secreted. It localises to the extracellular space. The protein localises to the extracellular matrix. Complexes with metalloproteinases (such as collagenases) and irreversibly inactivates them by binding to their catalytic zinc cofactor. May form part of a tissue-specific acute response to remodeling stimuli. This is Metalloproteinase inhibitor 3 (TIMP3) from Scyliorhinus torazame (Cloudy catshark).